The chain runs to 375 residues: tRNA-specific 2-thiouridylase MnmA (375 aa).

Residues 8–15 (GLSGGVDS) and methionine 34 each bind ATP. An interaction with target base in tRNA region spans residues 104–106 (NPD). Cysteine 109 (nucleophile) is an active-site residue. An intrachain disulfide couples cysteine 109 to cysteine 208. Glycine 134 lines the ATP pocket. The tract at residues 158–160 (KDQ) is interaction with tRNA. Cysteine 208 acts as the Cysteine persulfide intermediate in catalysis. Residues 321-322 (RY) are interaction with tRNA.

Belongs to the MnmA/TRMU family.

The protein localises to the cytoplasm. It carries out the reaction S-sulfanyl-L-cysteinyl-[protein] + uridine(34) in tRNA + AH2 + ATP = 2-thiouridine(34) in tRNA + L-cysteinyl-[protein] + A + AMP + diphosphate + H(+). In terms of biological role, catalyzes the 2-thiolation of uridine at the wobble position (U34) of tRNA, leading to the formation of s(2)U34. In Mycoplasma capricolum subsp. capricolum (strain California kid / ATCC 27343 / NCTC 10154), this protein is tRNA-specific 2-thiouridylase MnmA.